Consider the following 546-residue polypeptide: 2-isopropylmalate synthase (546 aa).

The Pyruvate carboxyltransferase domain occupies 5-274; the sequence is ITIFDTTLRD…TADVHTEHLT (270 aa). The Mn(2+) site is built by aspartate 14, histidine 209, histidine 211, and asparagine 245. Residues 415 to 546 are regulatory domain; sequence RLDQFSVHLS…QNGIMHTYGE (132 aa).

It belongs to the alpha-IPM synthase/homocitrate synthase family. LeuA type 1 subfamily. Homodimer. It depends on Mn(2+) as a cofactor.

The protein resides in the cytoplasm. It carries out the reaction 3-methyl-2-oxobutanoate + acetyl-CoA + H2O = (2S)-2-isopropylmalate + CoA + H(+). Its pathway is amino-acid biosynthesis; L-leucine biosynthesis; L-leucine from 3-methyl-2-oxobutanoate: step 1/4. Functionally, catalyzes the condensation of the acetyl group of acetyl-CoA with 3-methyl-2-oxobutanoate (2-ketoisovalerate) to form 3-carboxy-3-hydroxy-4-methylpentanoate (2-isopropylmalate). This chain is 2-isopropylmalate synthase, found in Salinibacter ruber (strain M8).